The primary structure comprises 188 residues: Elongation factor P (188 aa).

The residue at position 34 (lysine 34) is an N6-(3,6-diaminohexanoyl)-5-hydroxylysine.

Belongs to the elongation factor P family. Post-translationally, may be beta-lysylated on the epsilon-amino group of Lys-34 by the combined action of EpmA and EpmB, and then hydroxylated on the C5 position of the same residue by EpmC (if this protein is present). Lysylation is critical for the stimulatory effect of EF-P on peptide-bond formation. The lysylation moiety may extend toward the peptidyltransferase center and stabilize the terminal 3-CCA end of the tRNA. Hydroxylation of the C5 position on Lys-34 may allow additional potential stabilizing hydrogen-bond interactions with the P-tRNA.

Its subcellular location is the cytoplasm. The protein operates within protein biosynthesis; polypeptide chain elongation. Involved in peptide bond synthesis. Alleviates ribosome stalling that occurs when 3 or more consecutive Pro residues or the sequence PPG is present in a protein, possibly by augmenting the peptidyl transferase activity of the ribosome. Modification of Lys-34 is required for alleviation. This chain is Elongation factor P, found in Xanthomonas campestris pv. campestris (strain B100).